Reading from the N-terminus, the 73-residue chain is Probable minor pilin MMP0528 (73 aa).

A propeptide spanning residues 1 to 10 is cleaved from the precursor; that stretch reads MLKKLYSKKG. Residues 11–19 carry the QXSXEXXXL motif; that stretch reads QVSMEMGIL.

The N-terminus is probably cleaved by the prepilin peptidase EppA, which recognizes the class III signal sequence.

Its subcellular location is the secreted. It is found in the cell surface. The protein resides in the fimbrium. This chain is Probable minor pilin MMP0528, found in Methanococcus maripaludis (strain DSM 14266 / JCM 13030 / NBRC 101832 / S2 / LL).